The primary structure comprises 1044 residues: Isoleucine--tRNA ligase (1044 aa).

Residues 48–58 carry the 'HIGH' region motif; the sequence is PFATGLPHFGH. The short motif at 594–598 is the 'KMSKS' region element; it reads KMSKS. An ATP-binding site is contributed by K597.

Belongs to the class-I aminoacyl-tRNA synthetase family. IleS type 2 subfamily. As to quaternary structure, monomer. Requires Zn(2+) as cofactor.

Its subcellular location is the cytoplasm. It catalyses the reaction tRNA(Ile) + L-isoleucine + ATP = L-isoleucyl-tRNA(Ile) + AMP + diphosphate. Functionally, catalyzes the attachment of isoleucine to tRNA(Ile). As IleRS can inadvertently accommodate and process structurally similar amino acids such as valine, to avoid such errors it has two additional distinct tRNA(Ile)-dependent editing activities. One activity is designated as 'pretransfer' editing and involves the hydrolysis of activated Val-AMP. The other activity is designated 'posttransfer' editing and involves deacylation of mischarged Val-tRNA(Ile). This is Isoleucine--tRNA ligase from Borrelia duttonii (strain Ly).